The sequence spans 416 residues: Probable glucan 1,3-beta-glucosidase A (416 aa).

Residues 1–22 (MFVESAKKALLALSLLAASAQA) form the signal peptide. Residue N183 is glycosylated (N-linked (GlcNAc...) asparagine). Residue E210 is the Proton donor of the active site. Cystine bridges form between C290–C415 and C316–C342. Residue E308 is the Nucleophile of the active site.

This sequence belongs to the glycosyl hydrolase 5 (cellulase A) family. Monomer. Requires Mn(2+) as cofactor.

It is found in the secreted. It catalyses the reaction Successive hydrolysis of beta-D-glucose units from the non-reducing ends of (1-&gt;3)-beta-D-glucans, releasing alpha-glucose.. Functionally, beta-glucanases participate in the metabolism of beta-glucan, the main structural component of the cell wall. It could also function biosynthetically as a transglycosylase. The sequence is that of Probable glucan 1,3-beta-glucosidase A (exgA) from Aspergillus niger (strain ATCC MYA-4892 / CBS 513.88 / FGSC A1513).